Consider the following 149-residue polypeptide: L-alanine exporter AlaE (149 aa).

Helical transmembrane passes span 16-36, 46-66, 85-105, and 112-132; these read FAMV…LSGM, LVAI…RDLF, ILAY…VVGA, and AAVS…GYFL.

Belongs to the AlaE exporter family.

The protein localises to the cell inner membrane. Functionally, exports L-alanine. The protein is L-alanine exporter AlaE of Shigella flexneri.